The sequence spans 149 residues: Nucleoside diphosphate kinase (149 aa).

ATP is bound by residues Lys9, Phe57, Arg85, Thr91, Arg102, and Asn112. Catalysis depends on His115, which acts as the Pros-phosphohistidine intermediate.

The protein belongs to the NDK family. Mg(2+) is required as a cofactor.

It is found in the cytoplasm. It catalyses the reaction a 2'-deoxyribonucleoside 5'-diphosphate + ATP = a 2'-deoxyribonucleoside 5'-triphosphate + ADP. It carries out the reaction a ribonucleoside 5'-diphosphate + ATP = a ribonucleoside 5'-triphosphate + ADP. Functionally, major role in the synthesis of nucleoside triphosphates other than ATP. The ATP gamma phosphate is transferred to the NDP beta phosphate via a ping-pong mechanism, using a phosphorylated active-site intermediate. This is Nucleoside diphosphate kinase from Methanocorpusculum labreanum (strain ATCC 43576 / DSM 4855 / Z).